A 468-amino-acid polypeptide reads, in one-letter code: Eukaryotic translation initiation factor 3 subunit M (468 aa).

The disordered stretch occupies residues 42–61 (PLIEPLRQQEQSEEEPDRKQ). The region spanning 206 to 377 (DLELAQTHVV…SEFLVHRATY (172 aa)) is the PCI domain. The disordered stretch occupies residues 418–468 (MQAAAEETGQGKSGDKGAKGGDRRRNPQQQQQSQPSQPQQAREVELVGGAE). The span at 430-442 (SGDKGAKGGDRRR) shows a compositional bias: basic and acidic residues. A compositionally biased stretch (low complexity) spans 444 to 457 (PQQQQQSQPSQPQQ).

Belongs to the eIF-3 subunit M family. In terms of assembly, component of the eukaryotic translation initiation factor 3 (eIF-3) complex.

The protein localises to the cytoplasm. Component of the eukaryotic translation initiation factor 3 (eIF-3) complex, which is involved in protein synthesis of a specialized repertoire of mRNAs and, together with other initiation factors, stimulates binding of mRNA and methionyl-tRNAi to the 40S ribosome. The eIF-3 complex specifically targets and initiates translation of a subset of mRNAs involved in cell proliferation. This chain is Eukaryotic translation initiation factor 3 subunit M, found in Neosartorya fischeri (strain ATCC 1020 / DSM 3700 / CBS 544.65 / FGSC A1164 / JCM 1740 / NRRL 181 / WB 181) (Aspergillus fischerianus).